A 202-amino-acid chain; its full sequence is Small ribosomal subunit protein uS4 (202 aa).

The span at 1–13 (MSRYRGPRLRVTR) shows a compositional bias: basic residues. The segment at 1 to 42 (MSRYRGPRLRVTRRLGELPGLTRKASKKSNPPGQHGQARRKR) is disordered. Positions 90–152 (NRLDNVCFRL…KASKKLVEGN (63 aa)) constitute an S4 RNA-binding domain.

This sequence belongs to the universal ribosomal protein uS4 family. In terms of assembly, part of the 30S ribosomal subunit. Contacts protein S5. The interaction surface between S4 and S5 is involved in control of translational fidelity.

Its function is as follows. One of the primary rRNA binding proteins, it binds directly to 16S rRNA where it nucleates assembly of the body of the 30S subunit. In terms of biological role, with S5 and S12 plays an important role in translational accuracy. The chain is Small ribosomal subunit protein uS4 from Prochlorococcus marinus (strain AS9601).